Here is a 535-residue protein sequence, read N- to C-terminus: Beta-amylase 1, chloroplastic (535 aa).

A chloroplast-targeting transit peptide spans 1–36 (MALNLAQSAAAAACFATAGDARRAASVVAMPSSSSS). The substrate site is built by D115, H155, and D163. Catalysis depends on E247, which acts as the Proton donor. K361, H366, and T408 together coordinate substrate. E446 serves as the catalytic Proton acceptor. Residues 447–448 (NA) and R480 each bind substrate.

This sequence belongs to the glycosyl hydrolase 14 family.

The protein resides in the plastid. The protein localises to the chloroplast. The enzyme catalyses Hydrolysis of (1-&gt;4)-alpha-D-glucosidic linkages in polysaccharides so as to remove successive maltose units from the non-reducing ends of the chains.. Possesses beta-amylase activity in vitro. May be involved in cold resistance by mediating the accumulation of maltose upon freezing stress, thus contributing to the protection of membranes. This is Beta-amylase 1, chloroplastic from Oryza sativa subsp. japonica (Rice).